Consider the following 206-residue polypeptide: Small ribosomal subunit protein uS4 (206 aa).

Positions Cys-96–Val-156 constitute an S4 RNA-binding domain.

The protein belongs to the universal ribosomal protein uS4 family. Part of the 30S ribosomal subunit. Contacts protein S5. The interaction surface between S4 and S5 is involved in control of translational fidelity.

Functionally, one of the primary rRNA binding proteins, it binds directly to 16S rRNA where it nucleates assembly of the body of the 30S subunit. In terms of biological role, with S5 and S12 plays an important role in translational accuracy. In Pseudomonas putida (strain ATCC 47054 / DSM 6125 / CFBP 8728 / NCIMB 11950 / KT2440), this protein is Small ribosomal subunit protein uS4.